Consider the following 102-residue polypeptide: uncharacterized protein (102 aa).

The next 2 helical transmembrane spans lie at Phe-21–Phe-43 and Ser-58–Cys-80.

The protein resides in the membrane. This is an uncharacterized protein from Saccharomyces cerevisiae (strain ATCC 204508 / S288c) (Baker's yeast).